The chain runs to 60 residues: Homeobox protein CHOX-CAD2 (60 aa).

Residues 1–60 constitute a DNA-binding region (homeobox); it reads KEKYRVVYTDHQRLELEKEFHCNRYITIRRKSELAVNLGLSERQVKSWFQNRRAKERKII.

It belongs to the Caudal homeobox family.

The protein localises to the nucleus. The chain is Homeobox protein CHOX-CAD2 (CHOX-CAD2) from Gallus gallus (Chicken).